A 596-amino-acid chain; its full sequence is Probable protein S-acyltransferase 22 (596 aa).

2 consecutive transmembrane segments (helical) span residues 15-35 (VVAVAVFLALGFAFYVFFAPF) and 44-64 (IAMGIYTPLITCVVGLYIWCA). Residues 102-125 (TGGAKSHDGTCVEDTENGSNKKLE) form a disordered region. One can recognise a DHHC domain in the interval 163–213 (FYCSLCEVEVFKYSKHCRVCDKCVDRFDHHCRWLNNCIGKRNYRKFFSLMV). Cys193 functions as the S-palmitoyl cysteine intermediate in the catalytic mechanism. Transmembrane regions (helical) follow at residues 215–235 (AIFLLIMQWSTGIFVLVLCLL) and 254–274 (LIPFVIVVGVCTVLAMLATLP). 3 disordered regions span residues 433–455 (SGRRMFPTKYEGVNNNGKQRRQS), 498–523 (QTSRAMSGSGNVMVTSSPESSLDSHD), and 549–596 (MGQQ…HKSR). A compositionally biased stretch (polar residues) spans 498-518 (QTSRAMSGSGNVMVTSSPESS). Low complexity predominate over residues 549-571 (MGQQRGQQQQQQLSMMMMPLSRS).

Belongs to the DHHC palmitoyltransferase family.

Its subcellular location is the cell membrane. The protein localises to the cytoplasmic vesicle membrane. It carries out the reaction L-cysteinyl-[protein] + hexadecanoyl-CoA = S-hexadecanoyl-L-cysteinyl-[protein] + CoA. In terms of biological role, palmitoyl acyltransferase. The chain is Probable protein S-acyltransferase 22 (PAT22) from Arabidopsis thaliana (Mouse-ear cress).